The chain runs to 436 residues: Trigger factor (436 aa).

Residues Gly161–Pro246 enclose the PPIase FKBP-type domain.

It belongs to the FKBP-type PPIase family. Tig subfamily.

The protein resides in the cytoplasm. The enzyme catalyses [protein]-peptidylproline (omega=180) = [protein]-peptidylproline (omega=0). Its function is as follows. Involved in protein export. Acts as a chaperone by maintaining the newly synthesized protein in an open conformation. Functions as a peptidyl-prolyl cis-trans isomerase. In Ectopseudomonas mendocina (strain ymp) (Pseudomonas mendocina), this protein is Trigger factor.